The sequence spans 187 residues: Photosystem I assembly protein Ycf4 (187 aa).

2 helical membrane-spanning segments follow: residues 25 to 47 (YWWA…SSYL) and 62 to 84 (FVPQ…IYLW).

It belongs to the Ycf4 family.

The protein resides in the plastid. It is found in the chloroplast thylakoid membrane. Its function is as follows. Seems to be required for the assembly of the photosystem I complex. The protein is Photosystem I assembly protein Ycf4 of Mesostigma viride (Green alga).